The following is a 732-amino-acid chain: Phosphoribosylformylglycinamidine synthase subunit PurL (732 aa).

H32 is an active-site residue. Y35 contacts ATP. Mg(2+) is bound at residue E81. Residues 82 to 85 and R104 each bind substrate; that span reads SHNH. Residue H83 is the Proton acceptor of the active site. D105 serves as a coordination point for Mg(2+). Q230 contributes to the substrate binding site. D258 contacts Mg(2+). 302 to 304 is a binding site for substrate; the sequence is ESQ. Positions 485 and 522 each coordinate ATP. N523 provides a ligand contact to Mg(2+). S525 is a substrate binding site.

This sequence belongs to the FGAMS family. Monomer. Part of the FGAM synthase complex composed of 1 PurL, 1 PurQ and 2 PurS subunits.

The protein localises to the cytoplasm. The catalysed reaction is N(2)-formyl-N(1)-(5-phospho-beta-D-ribosyl)glycinamide + L-glutamine + ATP + H2O = 2-formamido-N(1)-(5-O-phospho-beta-D-ribosyl)acetamidine + L-glutamate + ADP + phosphate + H(+). The protein operates within purine metabolism; IMP biosynthesis via de novo pathway; 5-amino-1-(5-phospho-D-ribosyl)imidazole from N(2)-formyl-N(1)-(5-phospho-D-ribosyl)glycinamide: step 1/2. Functionally, part of the phosphoribosylformylglycinamidine synthase complex involved in the purines biosynthetic pathway. Catalyzes the ATP-dependent conversion of formylglycinamide ribonucleotide (FGAR) and glutamine to yield formylglycinamidine ribonucleotide (FGAM) and glutamate. The FGAM synthase complex is composed of three subunits. PurQ produces an ammonia molecule by converting glutamine to glutamate. PurL transfers the ammonia molecule to FGAR to form FGAM in an ATP-dependent manner. PurS interacts with PurQ and PurL and is thought to assist in the transfer of the ammonia molecule from PurQ to PurL. In Methanococcus aeolicus (strain ATCC BAA-1280 / DSM 17508 / OCM 812 / Nankai-3), this protein is Phosphoribosylformylglycinamidine synthase subunit PurL.